The chain runs to 616 residues: ATP-dependent zinc metalloprotease FtsH (616 aa).

The Cytoplasmic portion of the chain corresponds to 1–8; the sequence is MRNLFKTA. The helical transmembrane segment at 9–29 threads the bilayer; it reads TIYILIALVILLLVDIFSGGL. At 30–114 the chain is on the extracellular side; sequence SYNQFFSNLS…VTKEPPQVPW (85 aa). The chain crosses the membrane as a helical span at residues 115–135; the sequence is WLSTFLPMLIFAGLMIFVWIF. The Cytoplasmic portion of the chain corresponds to 136–616; that stretch reads MLQQTQGGGS…VFEDAQPQLV (481 aa). 208–215 provides a ligand contact to ATP; that stretch reads GPPGTGKT. His430 lines the Zn(2+) pocket. Residue Glu431 is part of the active site. Zn(2+)-binding residues include His434 and Asp506.

The protein in the central section; belongs to the AAA ATPase family. In the C-terminal section; belongs to the peptidase M41 family. Homohexamer. Zn(2+) serves as cofactor.

The protein resides in the cell membrane. Acts as a processive, ATP-dependent zinc metallopeptidase for both cytoplasmic and membrane proteins. Plays a role in the quality control of integral membrane proteins. This Caldicellulosiruptor bescii (strain ATCC BAA-1888 / DSM 6725 / KCTC 15123 / Z-1320) (Anaerocellum thermophilum) protein is ATP-dependent zinc metalloprotease FtsH.